We begin with the raw amino-acid sequence, 228 residues long: MQLTERERDKLLIFTAAQLARERRARGLKLNHPEAVALITAEVLEGIRDGRRVEDLMSFGAAILTPDDVLDGVPELIHEIQVEGTFPDGTKLVTVHDPIRGAASRRVAGEYLLEGGEIELNAGRPVTTLTVANTADRPVQVGSHFHFFEVNAGLRFDRAAAYGFRLNIPAGTAVRFEPGEEREVDLVPLGGSRTVYGMNALVNGDLDAPGTREAALEGARAAGFGGAQ.

The urease gamma stretch occupies residues 1–101; that stretch reads MQLTERERDK…LVTVHDPIRG (101 aa). Residues 102–228 form a urease beta region; that stretch reads AASRRVAGEY…ARAAGFGGAQ (127 aa).

This sequence in the N-terminal section; belongs to the urease gamma subunit family. It in the C-terminal section; belongs to the urease beta subunit family. In terms of assembly, heterohexamer of 3 UreC (alpha) and 3 UreAB (gamma/beta) subunits.

The protein resides in the cytoplasm. It catalyses the reaction urea + 2 H2O + H(+) = hydrogencarbonate + 2 NH4(+). It participates in nitrogen metabolism; urea degradation; CO(2) and NH(3) from urea (urease route): step 1/1. The protein is Urease subunit gamma/beta of Deinococcus radiodurans (strain ATCC 13939 / DSM 20539 / JCM 16871 / CCUG 27074 / LMG 4051 / NBRC 15346 / NCIMB 9279 / VKM B-1422 / R1).